A 151-amino-acid chain; its full sequence is MKDCKMQGIGSGVSLLILRFFLAWEFFESGLEKWNGQNWFAEIQDRFPFPFNLIPADINWHVAMGSELIFPFLLIFGVLTRFSALSLTILISVAWYSIHADSGYNVCDNGYKLPLIYVVTLLILITQGAGKLSLDTLIKKVYPTKSWLKFL.

4 helical membrane passes run 8–28 (GIGSGVSLLILRFFLAWEFFE), 60–80 (WHVAMGSELIFPFLLIFGVLT), 82–102 (FSALSLTILISVAWYSIHADS), and 113–133 (LPLIYVVTLLILITQGAGKLS).

This sequence belongs to the DoxX family.

It is found in the cell membrane. This is an uncharacterized protein from Haemophilus influenzae (strain ATCC 51907 / DSM 11121 / KW20 / Rd).